Consider the following 162-residue polypeptide: uncharacterized protein (162 aa).

A helical membrane pass occupies residues 5–25; the sequence is IIILFLFTAILCSITLCGCIS.

Its subcellular location is the membrane. This is an uncharacterized protein from Methanocaldococcus jannaschii (strain ATCC 43067 / DSM 2661 / JAL-1 / JCM 10045 / NBRC 100440) (Methanococcus jannaschii).